Here is a 344-residue protein sequence, read N- to C-terminus: Eukaryotic translation initiation factor 2 subunit alpha (344 aa).

Positions 21–92 (DMAVMIQVKT…ERGYIDLSKR (72 aa)) constitute an S1 motif domain. At S56 the chain carries Phosphoserine; by GCN2. Positions 309–344 (LRMDNEEMSGDEGSEDEEEDTGMGEVDIDGGSGIIE) are disordered. The span at 314 to 336 (EEMSGDEGSEDEEEDTGMGEVDI) shows a compositional bias: acidic residues. Phosphoserine; by CK2 occurs at positions 317 and 322.

Belongs to the eIF-2-alpha family. In terms of assembly, eukaryotic translation initiation factor 2 eIF2 is a heterotrimeric complex composed of an alpha, a beta and a gamma subunit. Post-translationally, phosphorylated at Ser-56 by GCN2. Phosphorylated at Ser-317 and Ser-322 by CK2.

The protein localises to the cytoplasm. The protein resides in the cytosol. Functions in the early steps of protein synthesis by forming a ternary complex with GTP and initiator tRNA. This complex binds to a 40S ribosomal subunit, followed by mRNA binding to form a 43S pre-initiation complex. Junction of the 60S ribosomal subunit to form the 80S initiation complex is preceded by hydrolysis of the GTP bound to eIF-2 and release of an eIF-2-GDP binary complex. In order for eIF-2 to recycle and catalyze another round of initiation, the GDP bound to eIF-2 must exchange with GTP by way of a reaction catalyzed by eIF2B. The chain is Eukaryotic translation initiation factor 2 subunit alpha from Arabidopsis thaliana (Mouse-ear cress).